The sequence spans 198 residues: Riboflavin synthase (198 aa).

2 Lumazine-binding repeats span residues Met-1–His-95 and Phe-96–Val-188. 2,4-dihydroxypteridine contacts are provided by residues Gly-4–Ile-6, Cys-46–Thr-48, Asp-60–Thr-65, Gly-99–Val-101, Lys-130, Ser-139–Thr-141, and Ser-153–Thr-158.

In terms of assembly, homotrimer.

The enzyme catalyses 2 6,7-dimethyl-8-(1-D-ribityl)lumazine + H(+) = 5-amino-6-(D-ribitylamino)uracil + riboflavin. Its pathway is cofactor biosynthesis; riboflavin biosynthesis; riboflavin from 2-hydroxy-3-oxobutyl phosphate and 5-amino-6-(D-ribitylamino)uracil: step 2/2. In terms of biological role, catalyzes the dismutation of two molecules of 6,7-dimethyl-8-ribityllumazine, resulting in the formation of riboflavin and 5-amino-6-(D-ribitylamino)uracil. The polypeptide is Riboflavin synthase (ribE) (Chlamydia muridarum (strain MoPn / Nigg)).